Here is a 267-residue protein sequence, read N- to C-terminus: Chlorophyll a-b binding protein 3A, chloroplastic (267 aa).

A chloroplast-targeting transit peptide spans 1–34 (MAASTMALSSSTFAGKTVKLAPSSSEITGNGRIT). The helical transmembrane segment at 153–173 (LVHAQSILAIWACQVVLMGAV) threads the bilayer. Positions 154, 158, 166, 174, 177, and 183 each coordinate chlorophyll b. Chlorophyll a is bound by residues Lys214, Glu215, Asn218, Arg220, Gln232, His247, and Ala256. The chain crosses the membrane as a helical span at residues 221 to 241 (LAMFSMFGFFVQAIVTGKGPL). Chlorophyll b is bound at residue Phe263.

The protein belongs to the light-harvesting chlorophyll a/b-binding (LHC) protein family. As to quaternary structure, the LHC complex consists of chlorophyll a-b binding proteins. Requires Binds at least 14 chlorophylls (8 Chl-a and 6 Chl-b) and carotenoids such as lutein and neoxanthin. as cofactor. Photoregulated by reversible phosphorylation of its threonine residues.

The protein localises to the plastid. It localises to the chloroplast thylakoid membrane. The light-harvesting complex (LHC) functions as a light receptor, it captures and delivers excitation energy to photosystems with which it is closely associated. The chain is Chlorophyll a-b binding protein 3A, chloroplastic (CAB3A) from Solanum lycopersicum (Tomato).